An 82-amino-acid chain; its full sequence is Delta-actitoxin-Aeq2c (82 aa).

Positions 1–19 (MNRLMILVFAAVFLALASA) are cleaved as a signal peptide. The propeptide occupies 20–26 (DEDVDIA). 3 cysteine pairs are disulfide-bonded: C32–C79, C34–C69, and C62–C80.

Belongs to the sea anemone sodium channel inhibitory toxin family. Type I subfamily.

The protein localises to the secreted. The protein resides in the nematocyst. Functionally, binds specifically to voltage-gated sodium channels (Nav), thereby delaying their inactivation during signal transduction. Causes death to crabs. This Actinia equina (Beadlet anemone) protein is Delta-actitoxin-Aeq2c.